A 219-amino-acid chain; its full sequence is Pollen-specific protein SF3 (219 aa).

2 LIM zinc-binding domains span residues 9 to 109 (QKCT…TRDK) and 110 to 167 (CNAC…QLFK). The segment at 181–219 (VAAPAESETQNTETQNAETQNADTQNADTQNTETQNGSV) is disordered. The span at 185–202 (AESETQNTETQNAETQNA) shows a compositional bias: low complexity. The span at 203 to 219 (DTQNADTQNTETQNGSV) shows a compositional bias: polar residues.

As to expression, pollen.

Its function is as follows. Could possibly involved in controlling pollen-specific processes such as male gamete maturation, pollen tube formation, or even fertilization. The chain is Pollen-specific protein SF3 (SF3) from Helianthus annuus (Common sunflower).